Consider the following 197-residue polypeptide: Amino-terminal enhancer of split (197 aa).

A compositionally biased stretch (low complexity) spans 1-15 (MMFPQSSSRHSGSSH). 2 disordered regions span residues 1–20 (MMFP…PQQL) and 169–197 (LGSQ…DKSD). Positions 166–197 (LSALGSQGHLPKEDKNGHEGDRRPDDDGDKSD) are CCN domain. Residues 175–197 (LPKEDKNGHEGDRRPDDDGDKSD) are compositionally biased toward basic and acidic residues.

This sequence belongs to the WD repeat Groucho/TLE family. As to quaternary structure, monomer. In terms of processing, ubiquitinated by XIAP/BIRC4. Predominantly expressed in brain, testis and ovary. Ubiquitously expressed in the developing embryo. Present in unfertilized and fertilized eggs.

Its subcellular location is the nucleus. Its function is as follows. May act as a transcriptional corepressor. Has a possible role in the negative regulation of proteins containing WD-40 repeats. May be required for the initiation and maintenance of the differentiated state. The chain is Amino-terminal enhancer of split (aes) from Xenopus laevis (African clawed frog).